A 133-amino-acid polypeptide reads, in one-letter code: uncharacterized protein (133 aa).

This is an uncharacterized protein from Mycobacterium tuberculosis (strain CDC 1551 / Oshkosh).